Here is a 244-residue protein sequence, read N- to C-terminus: Deoxynucleotide monophosphate kinase (244 aa).

A dGMP-binding site is contributed by K10. Residues R11, G13, D15, and T16 each coordinate ATP. I36, K37, R70, R137, G144, T145, V149, W157, D180, R182, Q183, E186, and T213 together coordinate dGMP.

Belongs to the dNMP kinase family. In terms of assembly, homodimer. The cofactor is Mg(2+).

It catalyses the reaction dTMP + ATP = dTDP + ADP. The catalysed reaction is dGMP + ATP = dGDP + ADP. It carries out the reaction 5-hydroxymethyl-dCMP + ATP = 5-hydroxymethyl-dCDP + ADP. In terms of biological role, allows the synthesis of deoxyribonucleoside triphosphates necessary for the rapid viral DNA replication. Phosphorylates dGMP, dTMP and 5-hydroxymethyl-dCMP (hmdCMP) while excluding dCMP and dAMP. The phosphorylation of 5-hydroxymethyl-dCMP represents the first step in the replacement of cytosine by hydroxymethylcytosine in new viral DNA genomes. The chain is Deoxynucleotide monophosphate kinase (1) from Escherichia phage RB69 (Bacteriophage RB69).